The primary structure comprises 327 residues: Sideroflexin FSF1 (327 aa).

An N-acetylalanine modification is found at A2. Transmembrane regions (helical) follow at residues 98 to 118 (NLVV…TVFW), 143 to 163 (SQLL…ALGL), 179 to 199 (LILG…VNVF), and 272 to 292 (ANLG…LGIF).

It belongs to the sideroflexin family.

It is found in the mitochondrion membrane. Its function is as follows. Mitochondrial amino-acid transporter that mediates transport of serine into mitochondria. This Saccharomyces cerevisiae (strain ATCC 204508 / S288c) (Baker's yeast) protein is Sideroflexin FSF1.